The primary structure comprises 633 residues: Pentatricopeptide repeat-containing protein At3g24000, mitochondrial (633 aa).

A mitochondrion-targeting transit peptide spans 1–63 (MALRFPPRLL…SYIPADRRFY (63 aa)). PPR repeat units lie at residues 94 to 124 (DIVMGNTLLNMYAKCGSLEEARKVFEKMPQR), 125 to 159 (DFVTWTTLISGYSQHDRPCDALLFFNQMLRFGYSP), 160 to 194 (NEFTLSSVIKAAAAERRGCCGHQLHGFCVKCGFDS), 195 to 225 (NVHVGSALLDLYTRYGLMDDAQLVFDALESR), 226 to 260 (NDVSWNALIAGHARRSGTEKALELFQGMLRDGFRP), 261 to 295 (SHFSYASLFGACSSTGFLEQGKWVHAYMIKSGEKL), 296 to 326 (VAFAGNTLLDMYAKSGSIHDARKIFDRLAKR), 327 to 361 (DVVSWNSLLTAYAQHGFGKEAVWWFEEMRRVGIRP), 362 to 396 (NEISFLSVLTACSHSGLLDEGWHYYELMKKDGIVP), and 397 to 431 (EAWHYVTVVDLLGRAGDLNRALRFIEEMPIEPTAA). A type E motif region spans residues 432-507 (IWKALLNACR…EPACSWVEIE (76 aa)). The segment at 508-538 (NAIHMFVANDERHPQREEIARKWEEVLAKIK) is type E(+) motif. A type DYW motif region spans residues 539–633 (ELGYVPDTSH…DGNCSCKDYW (95 aa)).

It belongs to the PPR family. PCMP-H subfamily.

It localises to the mitochondrion. The polypeptide is Pentatricopeptide repeat-containing protein At3g24000, mitochondrial (PCMP-H87) (Arabidopsis thaliana (Mouse-ear cress)).